We begin with the raw amino-acid sequence, 121 residues long: Type II secretion system protein I (121 aa).

Residues 1–6 (MKKQSG) constitute a propeptide, leader sequence. The residue at position 7 (Met-7) is an N-methylmethionine. A helical transmembrane segment spans residues 7-27 (MTLIEVMVALVVFALAGLAVM).

Belongs to the GSP I family. Type II secretion is composed of four main components: the outer membrane complex, the inner membrane complex, the cytoplasmic secretion ATPase and the periplasm-spanning pseudopilus. Interacts with core component PulG. In terms of processing, cleaved by prepilin peptidase. Methylated by prepilin peptidase at the amino group of the N-terminal methionine once the leader sequence is cleaved by prepilin peptidase.

Its subcellular location is the cell inner membrane. Component of the type II secretion system required for the energy-dependent secretion of extracellular factors such as proteases and toxins from the periplasm. Part of the pseudopilus tip complex that is critical for the recognition and binding of secretion substrates. The chain is Type II secretion system protein I (pulI) from Klebsiella pneumoniae.